A 357-amino-acid chain; its full sequence is Beta-hexosaminidase (357 aa).

Substrate contacts are provided by residues Asp-72, Arg-80, Arg-146, and 176 to 177 (KH). Catalysis depends on His-189, which acts as the Proton donor/acceptor. The Nucleophile role is filled by Asp-260.

This sequence belongs to the glycosyl hydrolase 3 family. NagZ subfamily.

The protein localises to the cytoplasm. The enzyme catalyses Hydrolysis of terminal non-reducing N-acetyl-D-hexosamine residues in N-acetyl-beta-D-hexosaminides.. It participates in cell wall biogenesis; peptidoglycan recycling. Its function is as follows. Plays a role in peptidoglycan recycling by cleaving the terminal beta-1,4-linked N-acetylglucosamine (GlcNAc) from peptide-linked peptidoglycan fragments, giving rise to free GlcNAc, anhydro-N-acetylmuramic acid and anhydro-N-acetylmuramic acid-linked peptides. The sequence is that of Beta-hexosaminidase from Hydrogenovibrio crunogenus (strain DSM 25203 / XCL-2) (Thiomicrospira crunogena).